A 505-amino-acid chain; its full sequence is Lysine--tRNA ligase (505 aa).

Glutamate 415 and glutamate 422 together coordinate Mg(2+).

The protein belongs to the class-II aminoacyl-tRNA synthetase family. As to quaternary structure, homodimer. It depends on Mg(2+) as a cofactor.

It is found in the cytoplasm. The catalysed reaction is tRNA(Lys) + L-lysine + ATP = L-lysyl-tRNA(Lys) + AMP + diphosphate. The sequence is that of Lysine--tRNA ligase from Enterobacter sp. (strain 638).